The following is a 179-amino-acid chain: Large ribosomal subunit protein uL5 (179 aa).

It belongs to the universal ribosomal protein uL5 family. As to quaternary structure, part of the 50S ribosomal subunit; part of the 5S rRNA/L5/L18/L25 subcomplex. Contacts the 5S rRNA and the P site tRNA. Forms a bridge to the 30S subunit in the 70S ribosome.

This is one of the proteins that bind and probably mediate the attachment of the 5S RNA into the large ribosomal subunit, where it forms part of the central protuberance. In the 70S ribosome it contacts protein S13 of the 30S subunit (bridge B1b), connecting the 2 subunits; this bridge is implicated in subunit movement. Contacts the P site tRNA; the 5S rRNA and some of its associated proteins might help stabilize positioning of ribosome-bound tRNAs. The protein is Large ribosomal subunit protein uL5 of Paramagnetospirillum magneticum (strain ATCC 700264 / AMB-1) (Magnetospirillum magneticum).